Here is a 204-residue protein sequence, read N- to C-terminus: Ribosomal RNA small subunit methyltransferase G (204 aa).

S-adenosyl-L-methionine contacts are provided by residues Gly69, Phe74, 123-124 (IE), and Arg137.

Belongs to the methyltransferase superfamily. RNA methyltransferase RsmG family.

The protein resides in the cytoplasm. It catalyses the reaction guanosine(527) in 16S rRNA + S-adenosyl-L-methionine = N(7)-methylguanosine(527) in 16S rRNA + S-adenosyl-L-homocysteine. Specifically methylates the N7 position of guanine in position 527 of 16S rRNA. The polypeptide is Ribosomal RNA small subunit methyltransferase G (Ruegeria pomeroyi (strain ATCC 700808 / DSM 15171 / DSS-3) (Silicibacter pomeroyi)).